A 332-amino-acid polypeptide reads, in one-letter code: Small ribosomal subunit protein uS2 (332 aa).

The protein belongs to the universal ribosomal protein uS2 family.

This Nitrobacter winogradskyi (strain ATCC 25391 / DSM 10237 / CIP 104748 / NCIMB 11846 / Nb-255) protein is Small ribosomal subunit protein uS2.